Consider the following 242-residue polypeptide: Caffeoyl-CoA O-methyltransferase 2 (242 aa).

Lys-16 contributes to the substrate binding site. S-adenosyl-L-methionine-binding positions include Thr-58, Glu-80, Gly-82–Val-83, Ser-88, Asp-106, and Ala-135. A substrate-binding site is contributed by Asp-158. Asp-158 lines the a divalent metal cation pocket. Asp-160 contributes to the S-adenosyl-L-methionine binding site. Residues Asp-184 and Asn-185 each coordinate a divalent metal cation. A substrate-binding site is contributed by Asn-189.

Belongs to the class I-like SAM-binding methyltransferase superfamily. Cation-dependent O-methyltransferase family. CCoAMT subfamily. Mg(2+) serves as cofactor. Mostly expressed in the bottom and middle parts of the stems.

It carries out the reaction (E)-caffeoyl-CoA + S-adenosyl-L-methionine = (E)-feruloyl-CoA + S-adenosyl-L-homocysteine + H(+). The protein operates within aromatic compound metabolism; phenylpropanoid biosynthesis. Functionally, methylates caffeoyl-CoA to feruloyl-CoA and 5-hydroxyferuloyl-CoA to sinapoyl-CoA. Plays a role in the synthesis of feruloylated polysaccharides. Involved in the reinforcement of the plant cell wall. Also involved in the responding to wounding or pathogen challenge by the increased formation of cell wall-bound ferulic acid polymers. Methylates 5-hydroxyferulolyl-CoA more efficiently than caffeoyl-CoA. This is Caffeoyl-CoA O-methyltransferase 2 (CCOAOMT2) from Nicotiana tabacum (Common tobacco).